A 382-amino-acid chain; its full sequence is Na(+)/H(+) antiporter NhaA 2 (382 aa).

10 consecutive transmembrane segments (helical) span residues 11–31 (FSVP…LDPA), 45–65 (LSFH…IAAV), 91–111 (LGGV…VGLP), 116–136 (GWGI…RMVF), 145–165 (YLLL…ALFY), 171–191 (PVVA…WGLG), 197–214 (SYWP…IGLH), 287–307 (WLVL…FGLL), 324–344 (LLVA…VSGS), and 353–373 (AAAK…MLLG).

It belongs to the NhaA Na(+)/H(+) (TC 2.A.33) antiporter family.

Its subcellular location is the cell inner membrane. The catalysed reaction is Na(+)(in) + 2 H(+)(out) = Na(+)(out) + 2 H(+)(in). Na(+)/H(+) antiporter that extrudes sodium in exchange for external protons. This Pelobacter propionicus (strain DSM 2379 / NBRC 103807 / OttBd1) protein is Na(+)/H(+) antiporter NhaA 2.